Consider the following 386-residue polypeptide: Indole-3-acetate O-methyltransferase 1 (386 aa).

Residue Tyr-30 coordinates S-adenosyl-L-methionine. Residues Tyr-30 and 33–37 contribute to the substrate site; that span reads NSQAQ. S-adenosyl-L-methionine-binding positions include Gly-72, 72–73, Asn-78, 108–111, Asp-110, 152–154, and 169–171; these read GC, FSDL, SFY, and AFS. 170–174 contributes to the substrate binding site; it reads FSLHW. 6 residues coordinate Mg(2+): Asn-191, Val-195, Arg-277, Asp-278, Phe-280, and Asn-281. Residue Ser-334 coordinates substrate.

The protein belongs to the methyltransferase superfamily. SABATH family. Homodimer. It depends on Mg(2+) as a cofactor. As to expression, expressed in seedling roots and leaves. Expressed in the stigma, funiculus, and vascular bundles in sepals, petals and stamens.

The catalysed reaction is (indol-3-yl)acetate + S-adenosyl-L-methionine = methyl (indol-3-yl)acetate + S-adenosyl-L-homocysteine. Catalyzes the methylation of the free carboxyl end of the plant hormone indole-3-acetic acid (IAA). Converts IAA to IAA methyl ester (MeIAA). Regulates IAA activities by IAA methylation. Methylation of IAA plays an important role in regulating plant development and auxin homeostasis. Required for correct leaf pattern formation. MeIAA seems to be an inactive form of IAA. This is Indole-3-acetate O-methyltransferase 1 (IAMT1) from Arabidopsis thaliana (Mouse-ear cress).